The primary structure comprises 280 residues: Eukaryotic translation initiation factor 3 subunit F-1 (280 aa).

The 131-residue stretch at 8 to 138 folds into the MPN domain; it reads VRVHPVVLFQ…LRAYVCIQLG (131 aa).

It belongs to the eIF-3 subunit F family. Component of the eukaryotic translation initiation factor 3 (eIF-3) complex. The eIF-3 complex interacts with pix.

The protein resides in the cytoplasm. Component of the eukaryotic translation initiation factor 3 (eIF-3) complex, which is involved in protein synthesis of a specialized repertoire of mRNAs and, together with other initiation factors, stimulates binding of mRNA and methionyl-tRNAi to the 40S ribosome. The eIF-3 complex specifically targets and initiates translation of a subset of mRNAs involved in cell proliferation. This Drosophila yakuba (Fruit fly) protein is Eukaryotic translation initiation factor 3 subunit F-1.